A 289-amino-acid chain; its full sequence is Epoxyqueuosine reductase (289 aa).

Aspartate 111 serves as the catalytic Proton donor. The 4Fe-4S ferredoxin-type domain occupies 156-185 (QGDRPHSQHCGTCTRCLEACPTQAIVEPFV). [4Fe-4S] cluster is bound by residues cysteine 165, cysteine 168, cysteine 171, cysteine 175, cysteine 191, cysteine 219, cysteine 222, and cysteine 226.

Belongs to the QueG family. In terms of assembly, monomer. Cob(II)alamin serves as cofactor. The cofactor is [4Fe-4S] cluster.

The protein resides in the cytoplasm. It catalyses the reaction epoxyqueuosine(34) in tRNA + AH2 = queuosine(34) in tRNA + A + H2O. It participates in tRNA modification; tRNA-queuosine biosynthesis. Its function is as follows. Catalyzes the conversion of epoxyqueuosine (oQ) to queuosine (Q), which is a hypermodified base found in the wobble positions of tRNA(Asp), tRNA(Asn), tRNA(His) and tRNA(Tyr). In Synechocystis sp. (strain ATCC 27184 / PCC 6803 / Kazusa), this protein is Epoxyqueuosine reductase.